Consider the following 130-residue polypeptide: Secreted RxLR effector protein 66 (130 aa).

A signal peptide spans 1 to 21; it reads MHLRLLMSTVITATLIVSNNA. The short motif at 32–62 is the RxLR-dEER element; it reads RALRGASTVGIAADNLLAAHFSPTLKHKESR. Residues 104–124 traverse the membrane as a helical segment; it reads GPAIAIFAGVAATFILIDYLI.

This sequence belongs to the RxLR effector family.

Its subcellular location is the secreted. It localises to the host cytoplasm. It is found in the host nucleus. The protein resides in the membrane. In terms of biological role, effector that acts as a broad suppressor of cell death to interrupt plant immunity. Inhibits cell death induced by cell death-inducing proteins, including the PAMP elicitor INF1 from P.infestans. This chain is Secreted RxLR effector protein 66, found in Plasmopara viticola (Downy mildew of grapevine).